The sequence spans 138 residues: Glutaredoxin-C7 (138 aa).

Residues 17-40 (SSTRGGGGGGMLGLTLFDPPGGEQ) are disordered. The Glutaredoxin domain maps to 42-137 (AERIGRLVRE…PRLREVGALC (96 aa)). Cysteine 62 and cysteine 65 form a disulfide bridge.

The protein belongs to the glutaredoxin family. CC-type subfamily.

Its subcellular location is the cytoplasm. Functionally, has a glutathione-disulfide oxidoreductase activity in the presence of NADPH and glutathione reductase. Reduces low molecular weight disulfides and proteins. In Oryza sativa subsp. japonica (Rice), this protein is Glutaredoxin-C7 (GRXC7).